Reading from the N-terminus, the 223-residue chain is MAAAGGGAAAAAGRAYSFKVVLLGEGCVGKTSLVLRYCENKFNDKHITTLQASFLTKKLNIGGKRVNLAIWDTAGQERFHALGPIYYRDSNGAILVYDVTDEDSFQKVKNWVKELRKMLGNEICLCIVGNKIDLEKERHVSIQEAESYAESVGAKHYHTSAKQNKGIEELFLDLCKRMIETAQVDERAKGNGSSQAGAARRGVQIIDDEPQAQSGSGGCCSSG.

Ala2 carries the post-translational modification N-acetylalanine. 10 residues coordinate GTP: Gly26, Gly29, Lys30, Thr31, Ser32, Asn43, Asp44, His46, Thr48, and Thr49. Mg(2+) is bound at residue Thr31. The short motif at 41–54 (KFNDKHITTLQASF) is the Switch 1 element. Positions 49 and 72 each coordinate Mg(2+). The short motif at 74 to 92 (AGQERFHALGPIYYRDSNG) is the Switch 2 element. Positions 75, 130, 131, 133, 161, and 162 each coordinate GTP. S-geranylgeranyl cysteine attachment occurs at residues Cys219 and Cys220. Cys220 is subject to Cysteine methyl ester. Positions 221-223 (SSG) are cleaved as a propeptide — removed in mature form.

This sequence belongs to the small GTPase superfamily. Rab family. As to quaternary structure, interacts with the cytoplasmic tail of integrins ITGA1, ITGA2, ITGA5, ITGA6, ITGA11 and ITGB1; this interaction is dependent upon its GDP/GTP cycle. Interacts with RABGEF1 (via VPS9 domain). Interacts with ANKRD27. Interacts (in GTP-bound form) with VAMP8 in response to starvation; the interaction probably regulates VAMP8 endolysosomal trafficking. Interacts (active GTP-bound form) with TMED10; the interaction is indirect and regulates TMED10 abundance and localization at the Golgi. Requires Mg(2+) as cofactor.

Its subcellular location is the endoplasmic reticulum membrane. It localises to the golgi apparatus. The protein localises to the trans-Golgi network. The protein resides in the golgi apparatus membrane. It is found in the early endosome membrane. Its subcellular location is the cytoplasmic vesicle membrane. It localises to the cleavage furrow. The protein localises to the cell projection. The protein resides in the neuron projection. It carries out the reaction GTP + H2O = GDP + phosphate + H(+). With respect to regulation, regulated by guanine nucleotide exchange factors (GEFs) including ANKRD27 and RABGEF1, which promote the exchange of bound GDP for free GTP. Regulated by GTPase activating proteins (GAPs) which increase the GTP hydrolysis activity. Inhibited by GDP dissociation inhibitors (GDIs). The small GTPases Rab are key regulators of intracellular membrane trafficking, from the formation of transport vesicles to their fusion with membranes. Rabs cycle between an inactive GDP-bound form and an active GTP-bound form that is able to recruit to membranes different sets of downstream effectors directly responsible for vesicle formation, movement, tethering and fusion. RAB21 is involved in membrane trafficking control. Regulates integrin internalization and recycling, but does not influence the traffic of endosomally translocated receptors in general. As a result, may regulate cell adhesion and migration. During the mitosis of adherent cells, controls the endosomal trafficking of integrins which is required for the successful completion of cytokinesis. Involved in neurite growth. Following SBF2/MTMT13-mediated activation in response to starvation-induced autophagy, binds to and regulates SNARE protein VAMP8 endolysosomal transport required for SNARE-mediated autophagosome-lysosome fusion. Modulates protein levels of the cargo receptors TMED2 and TMED10, and required for appropriate Golgi localization of TMED10. The chain is Ras-related protein Rab-21 from Rattus norvegicus (Rat).